Consider the following 406-residue polypeptide: Cysteine desulfurase (406 aa).

N6-(pyridoxal phosphate)lysine is present on Lys226. Residue Cys364 is the Cysteine persulfide intermediate of the active site.

Belongs to the class-V pyridoxal-phosphate-dependent aminotransferase family. Csd subfamily. As to quaternary structure, homodimer. Interacts with SufE and the SufBCD complex composed of SufB, SufC and SufD. The interaction with SufE is required to mediate the direct transfer of the sulfur atom from the S-sulfanylcysteine. It depends on pyridoxal 5'-phosphate as a cofactor.

It localises to the cytoplasm. The catalysed reaction is (sulfur carrier)-H + L-cysteine = (sulfur carrier)-SH + L-alanine. It catalyses the reaction L-selenocysteine + AH2 = hydrogenselenide + L-alanine + A + H(+). The protein operates within cofactor biosynthesis; iron-sulfur cluster biosynthesis. Cysteine desulfurases mobilize the sulfur from L-cysteine to yield L-alanine, an essential step in sulfur metabolism for biosynthesis of a variety of sulfur-containing biomolecules. Component of the suf operon, which is activated and required under specific conditions such as oxidative stress and iron limitation. Acts as a potent selenocysteine lyase in vitro, that mobilizes selenium from L-selenocysteine. Selenocysteine lyase activity is however unsure in vivo. This is Cysteine desulfurase from Escherichia coli O8 (strain IAI1).